The sequence spans 247 residues: CDP-diacylglycerol pyrophosphatase (247 aa).

A helical membrane pass occupies residues 5–22 (IVLALVVSVAVAGGWLWM).

The protein belongs to the Cdh family.

It is found in the cell inner membrane. The catalysed reaction is a CDP-1,2-diacyl-sn-glycerol + H2O = a 1,2-diacyl-sn-glycero-3-phosphate + CMP + 2 H(+). The protein operates within phospholipid metabolism; CDP-diacylglycerol degradation; phosphatidate from CDP-diacylglycerol: step 1/1. This Enterobacter sp. (strain 638) protein is CDP-diacylglycerol pyrophosphatase.